The following is a 148-amino-acid chain: Ribose-5-P isomerase B (148 aa).

D8 to E9 is a D-ribulose 5-phosphate binding site. The active-site Proton acceptor is C65. D-ribulose 5-phosphate contacts are provided by residues G66–G70, N99, R132, and K136.

Belongs to the LacAB/RpiB family.

It catalyses the reaction aldehydo-D-ribose 5-phosphate = D-ribulose 5-phosphate. It functions in the pathway carbohydrate degradation; pentose phosphate pathway; D-ribose 5-phosphate from D-ribulose 5-phosphate (non-oxidative stage): step 1/1. Functionally, catalyzes the interconversion of ribulose-5-P and ribose-5-P. The sequence is that of Ribose-5-P isomerase B from Listeria innocua serovar 6a (strain ATCC BAA-680 / CLIP 11262).